Consider the following 212-residue polypeptide: Large ribosomal subunit protein uL3 (212 aa).

N5-methylglutamine is present on Gln-153.

Belongs to the universal ribosomal protein uL3 family. In terms of assembly, part of the 50S ribosomal subunit. Forms a cluster with proteins L14 and L19. In terms of processing, methylated by PrmB.

Its function is as follows. One of the primary rRNA binding proteins, it binds directly near the 3'-end of the 23S rRNA, where it nucleates assembly of the 50S subunit. In Shewanella woodyi (strain ATCC 51908 / MS32), this protein is Large ribosomal subunit protein uL3.